Here is a 41-residue protein sequence, read N- to C-terminus: Large ribosomal subunit protein bL36 (41 aa).

Belongs to the bacterial ribosomal protein bL36 family.

The sequence is that of Large ribosomal subunit protein bL36 from Rhizobium etli (strain CIAT 652).